Here is a 273-residue protein sequence, read N- to C-terminus: MPCEELEIVWKNIKAEARALADCEPMLASFYHATLLKHENLGSALSYMLANKLASPIMPAIAIREVVEEAYAADPEMIASAACDIQAVRTRDPAVDKYSTPLLYLKGFHALQAYRIGHWLWNKGRRALAIFLQNQVSVSFQVDIHPAAKIGRGIMLDHATGIVVGETAVIEDDVSILQSVTLGGTGKTSGDRHPKIREGVMIGAGAKILGNIEVGRGAKIGAGSVVLQPVPPHTTAAGVPARIVGKPGSDKPSMDMDQHFNGIHHTFEYGDGI.

The protein belongs to the transferase hexapeptide repeat family. As to quaternary structure, part of the cysteine synthase complex formed at a ratio of 1 copy of this protein and 2 copies of O-acetylserine sulfhydrylase (cysK). The complex reversibly dissociates in the presence of O-acetyl-L-serine in the absence of hydrogen sulfide.

The protein localises to the cytoplasm. It carries out the reaction L-serine + acetyl-CoA = O-acetyl-L-serine + CoA. It functions in the pathway amino-acid biosynthesis; L-cysteine biosynthesis; L-cysteine from L-serine: step 1/2. Sensitive to feedback inhibition by L-cysteine. This Salmonella typhimurium (strain LT2 / SGSC1412 / ATCC 700720) protein is Serine acetyltransferase (cysE).